The primary structure comprises 105 residues: Nitrogenase-stabilizing/protective protein NifW (105 aa).

Belongs to the NifW family. As to quaternary structure, homotrimer; associates with NifD.

Functionally, may protect the nitrogenase Fe-Mo protein from oxidative damage. The sequence is that of Nitrogenase-stabilizing/protective protein NifW from Nostoc punctiforme (strain ATCC 29133 / PCC 73102).